We begin with the raw amino-acid sequence, 212 residues long: Ribosomal RNA small subunit methyltransferase G (212 aa).

S-adenosyl-L-methionine is bound by residues Gly-73, Ile-127–Glu-128, and Arg-143.

Belongs to the methyltransferase superfamily. RNA methyltransferase RsmG family.

It is found in the cytoplasm. The catalysed reaction is guanosine(527) in 16S rRNA + S-adenosyl-L-methionine = N(7)-methylguanosine(527) in 16S rRNA + S-adenosyl-L-homocysteine. Its function is as follows. Specifically methylates the N7 position of guanine in position 527 of 16S rRNA. The chain is Ribosomal RNA small subunit methyltransferase G from Methylobacterium sp. (strain 4-46).